The following is a 629-amino-acid chain: DNA mismatch repair protein MutL (629 aa).

The disordered stretch occupies residues 376–396 (QYHEKPQQNQPHFSNTPVLPN). Over residues 382 to 396 (QQNQPHFSNTPVLPN) the composition is skewed to polar residues.

The protein belongs to the DNA mismatch repair MutL/HexB family.

Its function is as follows. This protein is involved in the repair of mismatches in DNA. It is required for dam-dependent methyl-directed DNA mismatch repair. May act as a 'molecular matchmaker', a protein that promotes the formation of a stable complex between two or more DNA-binding proteins in an ATP-dependent manner without itself being part of a final effector complex. This chain is DNA mismatch repair protein MutL, found in Haemophilus influenzae (strain PittEE).